Reading from the N-terminus, the 186-residue chain is Ribosome-recycling factor (186 aa).

This sequence belongs to the RRF family.

The protein resides in the cytoplasm. Responsible for the release of ribosomes from messenger RNA at the termination of protein biosynthesis. May increase the efficiency of translation by recycling ribosomes from one round of translation to another. In Limosilactobacillus reuteri (Lactobacillus reuteri), this protein is Ribosome-recycling factor.